A 505-amino-acid chain; its full sequence is Cytochrome c oxidase subunit 1 (505 aa).

Residues L14–I34 traverse the membrane as a helical segment. Ca(2+)-binding residues include E37 and G42. 6 helical membrane-spanning segments follow: residues V55–G75, N98–E118, A143–V163, L180–A200, L229–V249, and V261–V281. Residue H60 coordinates Fe(II)-heme a. Residues H235 and Y239 each coordinate Cu cation. Residues H235–Y239 constitute a cross-link (1'-histidyl-3'-tyrosine (His-Tyr)). Y239 lines the O2 pocket. Positions 284 and 285 each coordinate Cu cation. The next 2 helical transmembrane spans lie at A302–Y322 and M332–L352. Residues H362 and D363 each contribute to the Mg(2+) site. Residue H370 coordinates heme a3. H372 is a Fe(II)-heme a binding site. The next 3 membrane-spanning stretches (helical) occupy residues V374 to I394, F408 to A428, and A446 to F466.

This sequence belongs to the heme-copper respiratory oxidase family. Component of the cytochrome c oxidase (complex IV, CIV), a multisubunit enzyme composed of a catalytic core of 3 subunits and several supernumerary subunits. The complex exists as a monomer or a dimer and forms supercomplexes (SCs) in the inner mitochondrial membrane with ubiquinol-cytochrome c oxidoreductase (cytochrome b-c1 complex, complex III, CIII). Heme serves as cofactor. Requires Cu cation as cofactor.

It is found in the mitochondrion inner membrane. The catalysed reaction is 4 Fe(II)-[cytochrome c] + O2 + 8 H(+)(in) = 4 Fe(III)-[cytochrome c] + 2 H2O + 4 H(+)(out). Its pathway is energy metabolism; oxidative phosphorylation. Its function is as follows. Component of the cytochrome c oxidase, the last enzyme in the mitochondrial electron transport chain which drives oxidative phosphorylation. The respiratory chain contains 3 multisubunit complexes succinate dehydrogenase (complex II, CII), ubiquinol-cytochrome c oxidoreductase (cytochrome b-c1 complex, complex III, CIII) and cytochrome c oxidase (complex IV, CIV), that cooperate to transfer electrons derived from NADH and succinate to molecular oxygen, creating an electrochemical gradient over the inner membrane that drives transmembrane transport and the ATP synthase. Cytochrome c oxidase is the component of the respiratory chain that catalyzes the reduction of oxygen to water. Electrons originating from reduced cytochrome c in the intermembrane space (IMS) are transferred via the dinuclear copper A center (CU(A)) of subunit 2 and heme A of subunit 1 to the active site in subunit 1, a binuclear center (BNC) formed by heme A3 and copper B (CU(B)). The BNC reduces molecular oxygen to 2 water molecules using 4 electrons from cytochrome c in the IMS and 4 protons from the mitochondrial matrix. This is Cytochrome c oxidase subunit 1 (COX1) from Chlamydomonas reinhardtii (Chlamydomonas smithii).